Here is a 63-residue protein sequence, read N- to C-terminus: Large ribosomal subunit protein eL24 (63 aa).

Zn(2+) contacts are provided by Cys7, Cys10, Cys33, and Cys37. A C4-type zinc finger spans residues 7–37; the sequence is CSFCGGSIEPGTGLMYVLRNGQILWFCSSKC.

Belongs to the eukaryotic ribosomal protein eL24 family. As to quaternary structure, part of the 50S ribosomal subunit. Forms a cluster with proteins L3 and L14. Zn(2+) serves as cofactor.

Its function is as follows. Binds to the 23S rRNA. The sequence is that of Large ribosomal subunit protein eL24 from Aeropyrum pernix (strain ATCC 700893 / DSM 11879 / JCM 9820 / NBRC 100138 / K1).